The sequence spans 575 residues: Sulfite reductase [NADPH] hemoprotein beta-component (575 aa).

The [4Fe-4S] cluster site is built by cysteine 440, cysteine 446, cysteine 485, and cysteine 489. A siroheme-binding site is contributed by cysteine 489.

It belongs to the nitrite and sulfite reductase 4Fe-4S domain family. Alpha(8)-beta(8). The alpha component is a flavoprotein, the beta component is a hemoprotein. It depends on siroheme as a cofactor. Requires [4Fe-4S] cluster as cofactor.

The catalysed reaction is hydrogen sulfide + 3 NADP(+) + 3 H2O = sulfite + 3 NADPH + 4 H(+). It functions in the pathway sulfur metabolism; hydrogen sulfide biosynthesis; hydrogen sulfide from sulfite (NADPH route): step 1/1. Its function is as follows. Component of the sulfite reductase complex that catalyzes the 6-electron reduction of sulfite to sulfide. This is one of several activities required for the biosynthesis of L-cysteine from sulfate. The sequence is that of Sulfite reductase [NADPH] hemoprotein beta-component from Chromohalobacter salexigens (strain ATCC BAA-138 / DSM 3043 / CIP 106854 / NCIMB 13768 / 1H11).